Consider the following 64-residue polypeptide: Large ribosomal subunit protein bL35 (64 aa).

Residues 1–29 (MPKMKTHSGAKKRFKLTGSGKLRRQQANR) form a disordered region.

Belongs to the bacterial ribosomal protein bL35 family.

The protein is Large ribosomal subunit protein bL35 of Pseudarthrobacter chlorophenolicus (strain ATCC 700700 / DSM 12829 / CIP 107037 / JCM 12360 / KCTC 9906 / NCIMB 13794 / A6) (Arthrobacter chlorophenolicus).